Here is a 44-residue protein sequence, read N- to C-terminus: Photosystem I reaction center subunit IX (44 aa).

A helical transmembrane segment spans residues Tyr7–Ile27.

This sequence belongs to the PsaJ family.

Its subcellular location is the plastid. The protein resides in the chloroplast thylakoid membrane. Its function is as follows. May help in the organization of the PsaE and PsaF subunits. In Ceratophyllum demersum (Rigid hornwort), this protein is Photosystem I reaction center subunit IX.